A 172-amino-acid chain; its full sequence is Protein-export protein SecB (172 aa).

The protein belongs to the SecB family. In terms of assembly, homotetramer, a dimer of dimers. One homotetramer interacts with 1 SecA dimer.

It localises to the cytoplasm. Its function is as follows. One of the proteins required for the normal export of preproteins out of the cell cytoplasm. It is a molecular chaperone that binds to a subset of precursor proteins, maintaining them in a translocation-competent state. It also specifically binds to its receptor SecA. The protein is Protein-export protein SecB of Maricaulis maris (strain MCS10) (Caulobacter maris).